The primary structure comprises 71 residues: Protein SlyX homolog (71 aa).

It belongs to the SlyX family.

The chain is Protein SlyX homolog from Rhodopseudomonas palustris (strain HaA2).